The sequence spans 579 residues: Protein O-linked-mannose beta-1,4-N-acetylglucosaminyltransferase 2 (579 aa).

Residues 1 to 4 (MGVG) lie on the Cytoplasmic side of the membrane. A helical; Signal-anchor for type II membrane protein membrane pass occupies residues 5-25 (TLLNGLLVSVVAALLWKYSKL). Over 26–579 (SEHAALLEEE…PFADVLMCRT (554 aa)) the chain is Lumenal. 3 N-linked (GlcNAc...) asparagine glycosylation sites follow: Asn-98, Asn-275, and Asn-542. The Fibronectin type-III domain maps to 480-579 (HPGRVRDARC…PFADVLMCRT (100 aa)).

The protein belongs to the glycosyltransferase 61 family.

Its subcellular location is the endoplasmic reticulum membrane. It carries out the reaction 3-O-(alpha-D-mannosyl)-L-threonyl-[protein] + UDP-N-acetyl-alpha-D-glucosamine = 3-O-(N-acetyl-beta-D-glucosaminyl-(1-&gt;4)-alpha-D-mannosyl)-L-threonyl-[protein] + UDP + H(+). It functions in the pathway protein modification; protein glycosylation. In terms of biological role, O-linked mannose beta-1,4-N-acetylglucosaminyltransferase that transfers UDP-N-acetyl-D-glucosamine to the 4-position of the mannose to generate N-acetyl-D-glucosamine-beta-1,4-O-D-mannosylprotein. Involved in the biosynthesis of the phosphorylated O-mannosyl trisaccharide (N-acetylgalactosamine-beta-3-N-acetylglucosamine-beta-4-(phosphate-6-)mannose), a carbohydrate structure present in alpha-dystroglycan (DAG1), which is required for binding laminin G-like domain-containing extracellular proteins with high affinity. The sequence is that of Protein O-linked-mannose beta-1,4-N-acetylglucosaminyltransferase 2 (pomgnt2) from Tetraodon nigroviridis (Spotted green pufferfish).